Consider the following 468-residue polypeptide: Transmembrane protein 151A (468 aa).

The tract at residues 1–20 (MPEGEGGDCGEVPALVPDGE) is disordered. The next 2 helical transmembrane spans lie at 45–65 (CLLLTLLIHACGAVVAWCRLA) and 98–118 (YLYIPLAFVSLLYLLYLAECW). The interval 384–438 (VSSNSLPPARPSGPRLPFSRSRLSLGAGGRTTPGVFRSLSGGPLGRRGEDTEPLE) is disordered.

This sequence belongs to the TMEM151 family. As to expression, highly expressed in the central nervous system (CNS) including the cerebral cortex, hippocampus, spinal cord, brainstem, and thalamus. Expression is relatively low during postnatal stages but highly expressed at postnatal day 14 (P14), and declined in adulthood. Also expressed in the stomach, heart, liver, spleen, lung, kidney, and muscle.

The protein resides in the endoplasmic reticulum membrane. The protein localises to the cell projection. It localises to the axon. It is found in the dendrite. The protein is Transmembrane protein 151A (Tmem151a) of Mus musculus (Mouse).